The primary structure comprises 159 residues: Transcription elongation factor GreA (159 aa).

The stretch at 7–72 forms a coiled coil; that stretch reads MTVRGAEKLR…IQEIESKLSN (66 aa).

The protein belongs to the GreA/GreB family.

Its function is as follows. Necessary for efficient RNA polymerase transcription elongation past template-encoded arresting sites. The arresting sites in DNA have the property of trapping a certain fraction of elongating RNA polymerases that pass through, resulting in locked ternary complexes. Cleavage of the nascent transcript by cleavage factors such as GreA or GreB allows the resumption of elongation from the new 3'terminus. GreA releases sequences of 2 to 3 nucleotides. The polypeptide is Transcription elongation factor GreA (Buchnera aphidicola subsp. Schizaphis graminum (strain Sg)).